A 447-amino-acid polypeptide reads, in one-letter code: Acidic leucine-rich nuclear phosphoprotein 32-related protein (447 aa).

LRR repeat units lie at residues 49-70, 71-90, and 96-117; these read NLQHLSVANIGVSSLEQFPRLG, NLQKLILSDNRITVGLEFLV, and SFCDLDLSNNRIQFVEDLAPLA. Residues 129-167 form the LRRCT domain; that stretch reads CPVTRLKDYRSRVFGLIKTLKYLDKTDAEGNERPESDDE. The tract at residues 155–447 is disordered; it reads DAEGNERPES…EDDDDDDEER (293 aa). Composition is skewed to acidic residues over residues 163–194 and 215–231; these read ESDDEDDEEDEEDEEEEEEGDEEDPGSGEIDG and VDVDEDEESDAEDDESE. The segment covering 232-242 has biased composition (polar residues); the sequence is QATGVNGTSYR. Composition is skewed to acidic residues over residues 256-277, 284-309, 336-374, 397-415, and 433-447; these read VREDDGDDSESGEEEVGEDNDV, EDSENEEDGVDDEEDDEEDEEEEEVD, GDDDEDGDGETGEDDQGVEDDGEFADEDDDVEEEDEESG, PINEDNDPDEEEEVEDDLP, and DDDDGEDDDDDDEER.

It belongs to the ANP32 family.

This is Acidic leucine-rich nuclear phosphoprotein 32-related protein from Arabidopsis thaliana (Mouse-ear cress).